We begin with the raw amino-acid sequence, 1215 residues long: Chromosome segregation protein sudA (1215 aa).

Residue 32-39 participates in ATP binding; it reads GRNGSGKS. The stretch at 177–522 forms a coiled coil; it reads KIMHETNSKR…LSQMMDHNTS (346 aa). The segment at 313 to 332 is disordered; that stretch reads SDNQAAAQESKARHDESLKA. One can recognise an SMC hinge domain in the interval 538–650; sequence EGVYGTLAEL…PNLQVASQYA (113 aa). Residues 654 to 676 are disordered; it reads GVNATTPEGDRSDKRGALTGGFH. Residues 684–1091 adopt a coiled-coil conformation; that stretch reads DAVKNLAKWR…EEAKHSVENY (408 aa).

The protein belongs to the SMC family. SMC3 subfamily.

It is found in the nucleus. Functionally, involved in chromosome segregation in mitosis. In Emericella nidulans (strain FGSC A4 / ATCC 38163 / CBS 112.46 / NRRL 194 / M139) (Aspergillus nidulans), this protein is Chromosome segregation protein sudA (sudA).